We begin with the raw amino-acid sequence, 209 residues long: Uracil phosphoribosyltransferase (209 aa).

Residues arginine 77, arginine 102, and 129–137 (DPMLATGSS) each bind 5-phospho-alpha-D-ribose 1-diphosphate. Uracil contacts are provided by residues isoleucine 192 and 197-199 (GDA). Aspartate 198 serves as a coordination point for 5-phospho-alpha-D-ribose 1-diphosphate.

Belongs to the UPRTase family. Mg(2+) serves as cofactor.

It catalyses the reaction UMP + diphosphate = 5-phospho-alpha-D-ribose 1-diphosphate + uracil. It participates in pyrimidine metabolism; UMP biosynthesis via salvage pathway; UMP from uracil: step 1/1. With respect to regulation, allosterically activated by GTP. Functionally, catalyzes the conversion of uracil and 5-phospho-alpha-D-ribose 1-diphosphate (PRPP) to UMP and diphosphate. This chain is Uracil phosphoribosyltransferase, found in Metamycoplasma hominis (Mycoplasma hominis).